Here is a 672-residue protein sequence, read N- to C-terminus: MKDIKNYILKLQDEIRYHAYLYHTLNSPKISDEKYDFLVIELQRLEKKCKYSVRFKDSPTQSVGSENLPEFKKFSHITPMLSLNNVFIKNDFLKFYKKIVNNITVEKIFFCSELKFDGVAINLIYINGLLFRAVTRGNGYEGEDVTSNVNMISSVPKKLIGIDIPETLEVRGEIFMLKSDFKKLNVRLTKFKKKLFSNSRNAASGSLRHKNAKVTELRSLTFYCYGCGYCSYENFTDSHFLRLKKLKSWGFPISDYNFLHSSYDEILRFYNFIQNERYFLNFNIDGIVIKVDSICLQKSLSTTSKAPRWAVAYKFSDKIKITTIMNILYQVGRTGVITPVAQVTPIYISGVLIKKVSLHNFNEIRRLNLNIGDSVFIKRSGDVIPHIIEVASKCKLQRNEDISIPKFCPECGSKLKVDSFSNIKIRCMAGLKCLSQFKKLLHYFCSKKGLNILGLGPKIIDKLVDLGYVSDLSDIFDLNVSLLTKVENIGIIKSQNIIRSINNSKNVSFSKFLCSLGIFEVGSIVARSISNYFFTLDKFMNSSKEEFLLINGIGVNIADNLYNFINDEFNKNIIFKLSKKLNISSDINAIIDNNNTLFRKKIVFSGSFSNFSRSKIIELSKKLGIIVVSSVSKSVDYIIIGKKPGRKLIKAKKFSIPGIYEKEFLNIINVYL.

Residues 32–36 (DEKYD), 82–83 (SL), and Glu-113 each bind NAD(+). Lys-115 functions as the N6-AMP-lysine intermediate in the catalytic mechanism. Residues Arg-136, Glu-173, Lys-290, and Lys-314 each coordinate NAD(+). Zn(2+) contacts are provided by Cys-408, Cys-411, Cys-427, and Cys-433. Residues 592 to 672 (DNNNTLFRKK…EFLNIINVYL (81 aa)) enclose the BRCT domain.

The protein belongs to the NAD-dependent DNA ligase family. LigA subfamily. The cofactor is Mg(2+). Mn(2+) serves as cofactor.

It catalyses the reaction NAD(+) + (deoxyribonucleotide)n-3'-hydroxyl + 5'-phospho-(deoxyribonucleotide)m = (deoxyribonucleotide)n+m + AMP + beta-nicotinamide D-nucleotide.. Its function is as follows. DNA ligase that catalyzes the formation of phosphodiester linkages between 5'-phosphoryl and 3'-hydroxyl groups in double-stranded DNA using NAD as a coenzyme and as the energy source for the reaction. It is essential for DNA replication and repair of damaged DNA. This is DNA ligase from Buchnera aphidicola subsp. Baizongia pistaciae (strain Bp).